The following is a 391-amino-acid chain: Nicotinate phosphoribosyltransferase (391 aa).

Phosphohistidine; by autocatalysis is present on H216.

Belongs to the NAPRTase family. Post-translationally, transiently phosphorylated on a His residue during the reaction cycle. Phosphorylation strongly increases the affinity for substrates and increases the rate of nicotinate D-ribonucleotide production. Dephosphorylation regenerates the low-affinity form of the enzyme, leading to product release.

The enzyme catalyses nicotinate + 5-phospho-alpha-D-ribose 1-diphosphate + ATP + H2O = nicotinate beta-D-ribonucleotide + ADP + phosphate + diphosphate. Its pathway is cofactor biosynthesis; NAD(+) biosynthesis; nicotinate D-ribonucleotide from nicotinate: step 1/1. In terms of biological role, catalyzes the synthesis of beta-nicotinate D-ribonucleotide from nicotinate and 5-phospho-D-ribose 1-phosphate at the expense of ATP. The sequence is that of Nicotinate phosphoribosyltransferase from Bordetella petrii (strain ATCC BAA-461 / DSM 12804 / CCUG 43448).